Reading from the N-terminus, the 275-residue chain is Thioredoxin-like 1-1, chloroplastic (275 aa).

The transit peptide at 1-72 (MTEVISKTSL…GDSQDESFRR (72 aa)) directs the protein to the chloroplast. The Thioredoxin domain occupies 73 to 206 (SSAITAQTTL…FRDALAKHGP (134 aa)). Residues Cys129 and Cys132 each act as nucleophile in the active site. An intrachain disulfide couples Cys129 to Cys132. The disordered stretch occupies residues 238 to 275 (KPVPVEKEAATPDSNPSLPVPLPSMSSNDEKTLVSAGR). Residues 249–264 (PDSNPSLPVPLPSMSS) show a composition bias toward low complexity.

Belongs to the thioredoxin family.

It localises to the plastid. It is found in the chloroplast. Functionally, thiol-disulfide oxidoreductase that may participate in various redox reactions. Possesses insulin disulfide bonds reducing activity. The sequence is that of Thioredoxin-like 1-1, chloroplastic from Arabidopsis thaliana (Mouse-ear cress).